Consider the following 1056-residue polypeptide: Carbamoyl phosphate synthase large chain (1056 aa).

Residues 1–401 form a carboxyphosphate synthetic domain region; sequence MPKRTDIHKI…ALHKAVRSLE (401 aa). Residues R129, R169, G175, G176, K208, I210, E215, G241, I242, H243, Q284, and E298 each contribute to the ATP site. The 195-residue stretch at 133–327 folds into the ATP-grasp 1 domain; it reads KELMNELGEP…IAKMAAKIAV (195 aa). 3 residues coordinate Mg(2+): Q284, E298, and N300. The Mn(2+) site is built by Q284, E298, and N300. The interval 402 to 546 is oligomerization domain; the sequence is IDEKDLFSAE…YSAYDHENES (145 aa). A carbamoyl phosphate synthetic domain region spans residues 547-929; that stretch reads QRTKKPSILV…ALHKAFSGAH (383 aa). The 191-residue stretch at 671 to 861 folds into the ATP-grasp 2 domain; that stretch reads DQVITDLNLK…MAQVATRVIL (191 aa). R707, A746, L748, E752, G777, V778, H779, S780, Q820, and E832 together coordinate ATP. 3 residues coordinate Mg(2+): Q820, E832, and N834. Mn(2+) is bound by residues Q820, E832, and N834. Residues 930 to 1056 enclose the MGS-like domain; the sequence is IQVPNDGKIL…DQSLEAITIK (127 aa). Residues 930–1056 form an allosteric domain region; sequence IQVPNDGKIL…DQSLEAITIK (127 aa).

Belongs to the CarB family. As to quaternary structure, composed of two chains; the small (or glutamine) chain promotes the hydrolysis of glutamine to ammonia, which is used by the large (or ammonia) chain to synthesize carbamoyl phosphate. Tetramer of heterodimers (alpha,beta)4. Requires Mg(2+) as cofactor. Mn(2+) serves as cofactor.

The enzyme catalyses hydrogencarbonate + L-glutamine + 2 ATP + H2O = carbamoyl phosphate + L-glutamate + 2 ADP + phosphate + 2 H(+). The catalysed reaction is hydrogencarbonate + NH4(+) + 2 ATP = carbamoyl phosphate + 2 ADP + phosphate + 2 H(+). It functions in the pathway amino-acid biosynthesis; L-arginine biosynthesis; carbamoyl phosphate from bicarbonate: step 1/1. Its pathway is pyrimidine metabolism; UMP biosynthesis via de novo pathway; (S)-dihydroorotate from bicarbonate: step 1/3. Its function is as follows. Large subunit of the glutamine-dependent carbamoyl phosphate synthetase (CPSase). CPSase catalyzes the formation of carbamoyl phosphate from the ammonia moiety of glutamine, carbonate, and phosphate donated by ATP, constituting the first step of 2 biosynthetic pathways, one leading to arginine and/or urea and the other to pyrimidine nucleotides. The large subunit (synthetase) binds the substrates ammonia (free or transferred from glutamine from the small subunit), hydrogencarbonate and ATP and carries out an ATP-coupled ligase reaction, activating hydrogencarbonate by forming carboxy phosphate which reacts with ammonia to form carbamoyl phosphate. The protein is Carbamoyl phosphate synthase large chain of Limosilactobacillus reuteri (strain DSM 20016) (Lactobacillus reuteri).